Here is a 374-residue protein sequence, read N- to C-terminus: MSVKRGIGDSAFLKKKIPQNPKYQHVKTRLDTGSSLTKYMERLEEARKNYRYRKDELFKRLKVTTFAQLVIQVASVSDQNDNIKDEMAGLEDDVSIFSASPGLDCLSDQTNGSPQPNLPPPQTINIDESGDNGFSPRSTLQSVISGVGELDLDKNGQKTIRLSPVSTSNTTECPYPDCPYLLLDVRDRELYDQCHIVSAYSYPIATLSRTMNPYTKEVLDYKNASGKIIIVYDEDERIASQAATTMCERGFENLFMLSGGLKVVAQKFPEGMTTGSVPISCLPSPTGPAGRKRSAQHQTSQLAEKKWRFTAEDLDKIQHYLEEVFIPSETSSRLSSRMSTSSARSKASTVGSSRQGSSIAGSESARSRSSRPWK.

The 98-residue stretch at 176-273 folds into the Rhodanese domain; sequence PDCPYLLLDV…VAQKFPEGMT (98 aa). Disordered regions lie at residues 279 to 301 and 329 to 374; these read ISCL…QTSQ and ETSS…RPWK. Over residues 329–349 the composition is skewed to low complexity; that stretch reads ETSSRLSSRMSTSSARSKAST.

This sequence belongs to the CEP41 family. In terms of tissue distribution, expressed in various ciliary organs, including Kupffer's vesicle, ear and heart, as well as brain and kidney.

The protein localises to the cytoplasm. It localises to the cytoskeleton. It is found in the microtubule organizing center. The protein resides in the centrosome. Its subcellular location is the cell projection. The protein localises to the cilium. It localises to the cilium basal body. Its function is as follows. Required during ciliogenesis for tubulin glutamylation in cilium. Probably acts by participating in the transport of tubulin polyglutamylases between the basal body and the cilium. The chain is Centrosomal protein of 41 kDa (cep41) from Danio rerio (Zebrafish).